The chain runs to 189 residues: UPF0340 protein SAG0103 (189 aa).

This sequence belongs to the UPF0340 family.

In Streptococcus agalactiae serotype V (strain ATCC BAA-611 / 2603 V/R), this protein is UPF0340 protein SAG0103.